Consider the following 299-residue polypeptide: Protoheme IX farnesyltransferase (299 aa).

A run of 9 helical transmembrane segments spans residues 25 to 45 (VVLL…RAGV), 47 to 67 (WTVL…AAAV), 95 to 115 (AAAL…LLTF), 119 to 139 (LAAW…TGFL), 147 to 167 (IVIG…AVTG), 173 to 193 (PLLL…ALAI), 218 to 238 (VHIL…FAIH), 243 to 263 (LYLA…IALY), and 277 to 297 (FSIW…YLLL).

Belongs to the UbiA prenyltransferase family. Protoheme IX farnesyltransferase subfamily.

The protein resides in the cell inner membrane. The catalysed reaction is heme b + (2E,6E)-farnesyl diphosphate + H2O = Fe(II)-heme o + diphosphate. It participates in porphyrin-containing compound metabolism; heme O biosynthesis; heme O from protoheme: step 1/1. Functionally, converts heme B (protoheme IX) to heme O by substitution of the vinyl group on carbon 2 of heme B porphyrin ring with a hydroxyethyl farnesyl side group. This chain is Protoheme IX farnesyltransferase, found in Stutzerimonas stutzeri (strain A1501) (Pseudomonas stutzeri).